The primary structure comprises 291 residues: Lys-63-specific deubiquitinase BRCC36 (291 aa).

Position 2 is an N-acetylalanine (alanine 2). The 168-residue stretch at 12-179 (VHLESDAFLV…YTCFQSVQAQ (168 aa)) folds into the MPN domain. Zn(2+) contacts are provided by histidine 122, histidine 124, and aspartate 135. The JAMM motif signature appears at 122-135 (HSHPHITVWPSHVD). Position 233 is a phosphoserine (serine 233).

The protein belongs to the peptidase M67A family. BRCC36 subfamily. Component of the ARISC complex, at least composed of UIMC1/RAP80, ABRAXAS1, BRCC3/BRCC36, BABAM2 and BABAM1/NBA1. Component of the BRCA1-A complex, at least composed of BRCA1, BARD1, UIMC1/RAP80, ABRAXAS1, BRCC3/BRCC36, BABAM2 and BABAM1/NBA1. In the BRCA1-A complex, interacts directly with ABRAXAS1 and BABAM2. Component of the BRISC complex, at least composed of ABRAXAS2, BRCC3/BRCC36, BABAM2 and BABAM1/NBA1. Identified in a complex with SHMT2 and the other subunits of the BRISC complex. In the BRISC complex, interacts directly with ABRAXAS2. Identified in a complex with ABRAXAS2 and NUMA1. The BRISC complex interacts with the CSN complex. Component of the BRCA1/BRCA2 containing complex (BRCC), which also contains BRCA1, BRCA2, BARD1, BABAM2 and RAD51. BRCC is a ubiquitin E3 ligase complex that enhances cellular survival following DNA damage. Interacts with BRCA1. Binds polyubiquitin. Interacts with PWWP2B. Interacts with HDAC1; this interaction is enhanced in the presence of PWWP2B. Zn(2+) is required as a cofactor.

Its subcellular location is the nucleus. It localises to the cytoplasm. The protein localises to the cytoskeleton. The protein resides in the spindle pole. In terms of biological role, metalloprotease that specifically cleaves 'Lys-63'-linked polyubiquitin chains. Does not have activity toward 'Lys-48'-linked polyubiquitin chains. Component of the BRCA1-A complex, a complex that specifically recognizes 'Lys-63'-linked ubiquitinated histones H2A and H2AX at DNA lesions sites, leading to target the BRCA1-BARD1 heterodimer to sites of DNA damage at double-strand breaks (DSBs). In the BRCA1-A complex, it specifically removes 'Lys-63'-linked ubiquitin on histones H2A and H2AX, antagonizing the RNF8-dependent ubiquitination at double-strand breaks (DSBs). Catalytic subunit of the BRISC complex, a multiprotein complex that specifically cleaves 'Lys-63'-linked ubiquitin in various substrates. Mediates the specific 'Lys-63'-specific deubiquitination associated with the COP9 signalosome complex (CSN), via the interaction of the BRISC complex with the CSN complex. The BRISC complex is required for normal mitotic spindle assembly and microtubule attachment to kinetochores via its role in deubiquitinating NUMA1. Plays a role in interferon signaling via its role in the deubiquitination of the interferon receptor IFNAR1; deubiquitination increases IFNAR1 activity by enhancing its stability and cell surface expression. Acts as a regulator of the NLRP3 inflammasome by mediating deubiquitination of NLRP3, leading to NLRP3 inflammasome assembly. Down-regulates the response to bacterial lipopolysaccharide (LPS) via its role in IFNAR1 deubiquitination. Deubiquitinates HDAC1 and PWWP2B leading to their stabilization. The chain is Lys-63-specific deubiquitinase BRCC36 (Brcc3) from Rattus norvegicus (Rat).